We begin with the raw amino-acid sequence, 556 residues long: Genetic interactor of prohibitins 3, mitochondrial (556 aa).

The transit peptide at 1–21 (MLNLCHALRGVRQFSCSVIVK) directs the protein to the mitochondrion. The region spanning 113–305 (ESTLNDILNY…LFDLPGYSTS (193 aa)) is the CP-type G domain.

Belongs to the TRAFAC class YlqF/YawG GTPase family. GEP3 subfamily.

It localises to the mitochondrion. Its function is as follows. Interacts genetically with prohibitins and thus may be involved in the mitochondrial lipid metabolism. This chain is Genetic interactor of prohibitins 3, mitochondrial (GEP3), found in Saccharomyces cerevisiae (strain ATCC 204508 / S288c) (Baker's yeast).